The sequence spans 532 residues: Developmental and secondary metabolism regulator ve1 (532 aa).

The Velvet domain maps to 26 to 220 (NRSLWYQLTV…ADQGCRVRIR (195 aa)). A Nuclear localization signal motif is present at residues 40–45 (ERARAC). Over residues 217–229 (VRIRRDVRMRKRD) the composition is skewed to basic residues. Disordered stretches follow at residues 217 to 440 (VRIR…TEPS) and 458 to 520 (PQVD…RADG). Residues 233–250 (GGNNNNNNNAGNNAGNNG) are compositionally biased toward low complexity. Basic and acidic residues-rich tracts occupy residues 251 to 260 (FERREEDFGR) and 283 to 294 (SEHRASYSDVSR). The span at 302 to 317 (YPPPPPPPPSYDPTPS) shows a compositional bias: pro residues. Positions 397–411 (STSTYVPPSPSVYST) are enriched in low complexity. Residues 435–463 (MNTEPSRGSIKISALVEPMPVIEPQVDPL) form a PEST region. The segment covering 481 to 493 (FAQNTRPLFNGQR) has biased composition (polar residues).

Belongs to the velvet family. VeA subfamily. As to quaternary structure, component of the heterotrimeric velvet complex composed of laeA, ve1 and velB; Ve1 acting as a bridging protein between laeA and velB. Interacts directly with laeA and velB.

The protein resides in the nucleus. It localises to the cytoplasm. Component of the velvet transcription factor complex that controls sexual/asexual developmental ratio in response to light, promoting sexual development in the darkness while stimulating asexual sporulation under illumination. The velvet complex hat acts as a global regulator for secondary metabolite gene expression. Controls the expression of the aurofusarin and trichothecene gene clusters. Also controls the expression of the deoxynivalenol (DON) gene cluster. Regulates hyphal growth and pigment formation. Acts as a positive regulator of virulence. The protein is Developmental and secondary metabolism regulator ve1 of Gibberella zeae (strain ATCC MYA-4620 / CBS 123657 / FGSC 9075 / NRRL 31084 / PH-1) (Wheat head blight fungus).